The primary structure comprises 232 residues: Ribonuclease 3 (232 aa).

In terms of domain architecture, RNase III spans 6 to 133 (FNDIENRLGV…VIAAVYLDKG (128 aa)). Glu46 is a binding site for Mg(2+). The active site involves Asp50. Positions 119 and 122 each coordinate Mg(2+). The active site involves Glu122. Positions 160–229 (DFKTKLQELL…AKEALKRLEK (70 aa)) constitute a DRBM domain.

It belongs to the ribonuclease III family. As to quaternary structure, homodimer. Requires Mg(2+) as cofactor.

Its subcellular location is the cytoplasm. It catalyses the reaction Endonucleolytic cleavage to 5'-phosphomonoester.. Functionally, digests double-stranded RNA. Involved in the processing of primary rRNA transcript to yield the immediate precursors to the large and small rRNAs (23S and 16S). Processes some mRNAs, and tRNAs when they are encoded in the rRNA operon. Processes pre-crRNA and tracrRNA of type II CRISPR loci if present in the organism. The chain is Ribonuclease 3 from Clostridium botulinum (strain Alaska E43 / Type E3).